Consider the following 205-residue polypeptide: High frequency lysogenization protein HflD homolog (205 aa).

This sequence belongs to the HflD family.

It localises to the cytoplasm. The protein localises to the cell inner membrane. The sequence is that of High frequency lysogenization protein HflD homolog from Haemophilus influenzae (strain 86-028NP).